We begin with the raw amino-acid sequence, 552 residues long: DUF724 domain-containing protein 10 (552 aa).

Residues serine 308 to cysteine 361 are disordered. Residues proline 333–glutamate 348 are compositionally biased toward polar residues. One can recognise a DUF724 domain in the interval isoleucine 371 to proline 543.

As to expression, expressed at low levels in leaves, stems, flowers and siliques.

May be involved in the polar growth of plant cells via transportation of RNAs. This is DUF724 domain-containing protein 10 from Arabidopsis thaliana (Mouse-ear cress).